Reading from the N-terminus, the 943-residue chain is MSKKRLYEIAKEVGVESKVIVAKAQELGLSVKSHSSSVEEADANRITSSLKAGTAKDESKPAPKATPTPKEEKVEPKVDKASVAKSAPAKETSKAEVKEASVALKKPKSRNFKAEREARAKAEAERRKNGGGRDNRNRNQQGNDQGKRHNNDRRNQKGNGQGDHNKGNRDNSTNHDRNFQGKLRNDQNQNNRRDNARNNQAGPRIDLKARAAALKAEQNAEYSRQSETRFREEKAAEQRRAKEQEKARKEKQQAEVAVQKAAAETKPAPKPAPVAPQSAPTAQVQDTRRKKVRPNKSRDNHRVNEDGPKQTRNNKWNNQNQVRNQRNSNWNKNKNKKGKNNRGNSAPKLVTERKFHELPKEFEYTEGMTVAEIAKRIKREPAEIVKKLFMMGVMATQNQSLDGDTIELLMVDYGIEATKKEEVDNADIERFFVDEDYLNKDAMVERAPVVTIMGHVDHGKTTLLDTLRNSRVATGEAGGITQHIGAYQIEEGGKKITFLDTPGHAAFTSMRARGASVTDITVLIVAADDGVMPQTIEAINHSKAAGVPIIVAINKIDKPDANPERVIGELAEHGVISTAWGGDSEFVEISAKFGQNIEELLETILLVAEVEELKADPTVRAIGTVIEARLDKGKGAVATLLVQQGTLNVQDPIVVGNTFGRVRAMTNDLGRRIKTAGPSAPVSITGLNEAPMAGDHFAVYEDEKAARAAGEERAKRALMKQRQQTHRVSLDNLFDTLKAGEMKTVNVIIKADVQGSVEALAASLLKIDVEGVRVNVVHSAVGAINESDITLAEASDAVVIGFNVRPTPQARQQAETDEVEIRLHSIIYKVIEEIEDAMKGMLDPEFEEKIIGEAVIRETFKVSKVGTIGGFMVTNGKITRDSSARVIRDGVVIFDGKLASLKHYKDDVKEVGNAQEGGLTIENYNDIKVDDVIEAYIMEEIKR.

The interval Leu-29–Leu-349 is disordered. Basic and acidic residues-rich tracts occupy residues Pro-69–Ser-82, Phe-112–Asn-137, Gln-145–Asn-155, Asp-163–Ala-196, and Arg-224–Gln-253. Low complexity predominate over residues Ala-254–Lys-266. Residues Lys-296–Lys-309 are compositionally biased toward basic and acidic residues. The span at Asn-313–Lys-332 shows a compositional bias: low complexity. One can recognise a tr-type G domain in the interval Glu-445–Lys-614. The G1 stretch occupies residues Gly-454 to Thr-461. Gly-454–Thr-461 serves as a coordination point for GTP. The G2 stretch occupies residues Gly-479 to His-483. The tract at residues Asp-500–Gly-503 is G3. GTP contacts are provided by residues Asp-500 to His-504 and Asn-554 to Asp-557. Positions Asn-554–Asp-557 are G4. The tract at residues Ser-590–Lys-592 is G5.

Belongs to the TRAFAC class translation factor GTPase superfamily. Classic translation factor GTPase family. IF-2 subfamily.

It is found in the cytoplasm. Functionally, one of the essential components for the initiation of protein synthesis. Protects formylmethionyl-tRNA from spontaneous hydrolysis and promotes its binding to the 30S ribosomal subunits. Also involved in the hydrolysis of GTP during the formation of the 70S ribosomal complex. This chain is Translation initiation factor IF-2, found in Streptococcus thermophilus (strain ATCC BAA-491 / LMD-9).